The primary structure comprises 126 residues: uncharacterized protein (126 aa).

Disordered regions lie at residues 15-72 and 93-126; these read PEWG…SDPQ and TQIP…TTSN. Composition is skewed to basic and acidic residues over residues 29 to 46 and 55 to 64; these read DPLD…RVPE and VQEDSREHGQ.

This is an uncharacterized protein from Homo sapiens (Human).